The chain runs to 465 residues: Cysteine--tRNA ligase (465 aa).

Cys-30 is a Zn(2+) binding site. The 'HIGH' region signature appears at 32–42 (ITVYDYCHVGH). 3 residues coordinate Zn(2+): Cys-214, His-239, and Glu-243. Residues 271-275 (KMSKS) carry the 'KMSKS' region motif. Position 274 (Lys-274) interacts with ATP.

It belongs to the class-I aminoacyl-tRNA synthetase family. In terms of assembly, monomer. Zn(2+) is required as a cofactor.

Its subcellular location is the cytoplasm. The enzyme catalyses tRNA(Cys) + L-cysteine + ATP = L-cysteinyl-tRNA(Cys) + AMP + diphosphate. In Burkholderia ambifaria (strain ATCC BAA-244 / DSM 16087 / CCUG 44356 / LMG 19182 / AMMD) (Burkholderia cepacia (strain AMMD)), this protein is Cysteine--tRNA ligase.